The following is a 215-amino-acid chain: 3-demethoxyubiquinol 3-hydroxylase (215 aa).

Fe cation is bound by residues E64, E94, H97, E146, E178, and H181.

This sequence belongs to the COQ7 family. Requires Fe cation as cofactor.

The protein resides in the cell membrane. It carries out the reaction a 5-methoxy-2-methyl-3-(all-trans-polyprenyl)benzene-1,4-diol + AH2 + O2 = a 3-demethylubiquinol + A + H2O. The protein operates within cofactor biosynthesis; ubiquinone biosynthesis. In terms of biological role, catalyzes the hydroxylation of 2-nonaprenyl-3-methyl-6-methoxy-1,4-benzoquinol during ubiquinone biosynthesis. In Pseudomonas savastanoi pv. phaseolicola (strain 1448A / Race 6) (Pseudomonas syringae pv. phaseolicola (strain 1448A / Race 6)), this protein is 3-demethoxyubiquinol 3-hydroxylase.